Reading from the N-terminus, the 256-residue chain is MTKITRIVREARDQTRLTALDFAKAIFDDFIQLHGDRSFRDDGAVIGGIGSLDGRPVTVIGIQKGKNLQDNLKRNFGQPHPEGYRKALRLMKQAEKFGRPIVTFINTAGAYPGVGAEERGQGEAIARNLMEMSDLKVPIIAIIIGEGGSGGALALGVANRVWMLENSIYAVLSPEGFASILWKDGSRAMEAAELMKITSHELLQMEIVDKVIEETGLSNQDLITSIKQELLVELEQLSSWSVEELVDQRYQRFRKY.

The CoA carboxyltransferase C-terminal domain occupies 1 to 236; it reads MTKITRIVRE…KQELLVELEQ (236 aa).

It belongs to the AccA family. In terms of assembly, acetyl-CoA carboxylase is a heterohexamer composed of biotin carboxyl carrier protein (AccB), biotin carboxylase (AccC) and two subunits each of ACCase subunit alpha (AccA) and ACCase subunit beta (AccD).

The protein localises to the cytoplasm. The catalysed reaction is N(6)-carboxybiotinyl-L-lysyl-[protein] + acetyl-CoA = N(6)-biotinyl-L-lysyl-[protein] + malonyl-CoA. It functions in the pathway lipid metabolism; malonyl-CoA biosynthesis; malonyl-CoA from acetyl-CoA: step 1/1. In terms of biological role, component of the acetyl coenzyme A carboxylase (ACC) complex. First, biotin carboxylase catalyzes the carboxylation of biotin on its carrier protein (BCCP) and then the CO(2) group is transferred by the carboxyltransferase to acetyl-CoA to form malonyl-CoA. The polypeptide is Acetyl-coenzyme A carboxylase carboxyl transferase subunit alpha (Streptococcus gordonii (strain Challis / ATCC 35105 / BCRC 15272 / CH1 / DL1 / V288)).